Consider the following 141-residue polypeptide: MAIERTLSIIKPDAVAKNVIGKIYQRFEDAGLKIIAAKMVHLSEQEAGQFYAVHKERPFYKDLVSFMTSGPVMIQCLEGENAIAKNRELMGATDPKKADAGTIRADFADSIDANAVHGSDAPETAAVEVAFFFPGMNVYSR.

ATP-binding residues include Lys-11, Phe-59, Arg-87, Thr-93, Arg-104, and Asn-114. Residue His-117 is the Pros-phosphohistidine intermediate of the active site.

Belongs to the NDK family. Homotetramer. Mg(2+) serves as cofactor.

It localises to the cytoplasm. The enzyme catalyses a 2'-deoxyribonucleoside 5'-diphosphate + ATP = a 2'-deoxyribonucleoside 5'-triphosphate + ADP. It catalyses the reaction a ribonucleoside 5'-diphosphate + ATP = a ribonucleoside 5'-triphosphate + ADP. Major role in the synthesis of nucleoside triphosphates other than ATP. The ATP gamma phosphate is transferred to the NDP beta phosphate via a ping-pong mechanism, using a phosphorylated active-site intermediate. The sequence is that of Nucleoside diphosphate kinase from Azoarcus sp. (strain BH72).